A 376-amino-acid polypeptide reads, in one-letter code: MGDKKRVLVIFGGQSSEHEVSRISATSILKNINLDKFDVSMIGITKDGKWLYYDGPIDKIPSGEWEEIALKDGTRSIADRVSLFDNIISCKNNACGLEKASENEKSKKIDVVFPVLHGCNGEDGTIQGLFELAGIPYVGCGVLASAVGMDKIYAKIIFEKAGIPQADYLYFTRKEIYGDVEGVVDKIEEKFSYPVFVKPSNAGSSVGVSKAHDKNELKEALIYAARYDRKVLIEEFINGREVECAVLGNDDPVASTVGEIIPGNEFYDYKAKYIENTSKIKIPADLPEETVEQIRNYAVKAFKALDCSGLARVDFFVHKETGKVYINEINTMPGFTSISMYPMLWEESGISYPELIEKLIDLAVQRYNDNLKEYDE.

Positions 155 to 361 constitute an ATP-grasp domain; it reads KIIFEKAGIP…YPELIEKLID (207 aa). 188–243 contributes to the ATP binding site; that stretch reads EEKFSYPVFVKPSNAGSSVGVSKAHDKNELKEALIYAARYDRKVLIEEFINGREVE. The Mg(2+) site is built by Asp314, Glu328, and Asn330.

The protein belongs to the D-alanine--D-alanine ligase family. Mg(2+) is required as a cofactor. Requires Mn(2+) as cofactor.

Its subcellular location is the cytoplasm. The catalysed reaction is 2 D-alanine + ATP = D-alanyl-D-alanine + ADP + phosphate + H(+). The protein operates within cell wall biogenesis; peptidoglycan biosynthesis. Its function is as follows. Cell wall formation. This Acetivibrio thermocellus (strain ATCC 27405 / DSM 1237 / JCM 9322 / NBRC 103400 / NCIMB 10682 / NRRL B-4536 / VPI 7372) (Clostridium thermocellum) protein is D-alanine--D-alanine ligase.